Consider the following 102-residue polypeptide: Small ribosomal subunit protein uS10 (102 aa).

The disordered stretch occupies residues 34-59 (QMSGPIPLPTKRLLVPTRKSPDGEGK).

Belongs to the universal ribosomal protein uS10 family. As to quaternary structure, part of the 30S ribosomal subunit.

Its function is as follows. Involved in the binding of tRNA to the ribosomes. This Methanopyrus kandleri (strain AV19 / DSM 6324 / JCM 9639 / NBRC 100938) protein is Small ribosomal subunit protein uS10.